The sequence spans 147 residues: LDHNNLTRMPGPLPRSLRELHLDHNQISRVPNNALEGLENLTALYLQHNEIQEVGSSMRGLRSLILLDLSYNHLRKVPDGLPSALEQLYLEHNNVYSVPDSYFRGSPKLLYVRLSHNSLTNNGLASNTFNSSSLLELDLSYNQLQKI.

LRR repeat units lie at residues 1–15 (LDHN…PLPR), 16–37 (SLRE…ALEG), 40–61 (NLTA…MRGL), 63–84 (SLIL…LPSA), 85–105 (LEQL…YFRG), and 108–128 (KLLY…ASNT). A glycan (N-linked (GlcNAc...) (keratan sulfate) asparagine) is linked at N5. N40 carries N-linked (GlcNAc...) (keratan sulfate) asparagine glycosylation. The N-linked (GlcNAc...) (keratan sulfate) asparagine glycan is linked to N130. Residues 133 to 147 (SLLELDLSYNQLQKI) form an LRR 7 repeat.

Belongs to the small leucine-rich proteoglycan (SLRP) family. SLRP class II subfamily. In terms of assembly, binds to type I and type II collagen. Post-translationally, binds keratan sulfate chains.

It localises to the secreted. The protein resides in the extracellular space. It is found in the extracellular matrix. Functionally, affects the rate of fibrils formation. May have a primary role in collagen fibrillogenesis. This chain is Fibromodulin (FMOD), found in Sus scrofa (Pig).